The following is a 93-amino-acid chain: YcgL domain-containing protein VV1_0131 (93 aa).

In terms of domain architecture, YcgL spans 1–84 (MLCSIYKSSK…PPENLLQQHK (84 aa)). The interval 72–93 (LPPPPENLLQQHKERKAQQKND) is disordered.

In Vibrio vulnificus (strain CMCP6), this protein is YcgL domain-containing protein VV1_0131.